The primary structure comprises 141 residues: Nuclear receptor 2C2-associated protein (141 aa).

This sequence belongs to the NR2C2AP family.

The protein resides in the nucleus. Functionally, may act as a repressor of nr2c2-mediated transactivation by suppressing the binding between nr2c2 and its response element in target genes. The sequence is that of Nuclear receptor 2C2-associated protein (nr2c2ap) from Danio rerio (Zebrafish).